Reading from the N-terminus, the 366-residue chain is Putative integrase/recombinase HI_1572 (366 aa).

In terms of domain architecture, Core-binding (CB) spans 54–133 (ITLDELIDKY…SLSALMAKTI (80 aa)). A Tyr recombinase domain is found at 168 to 331 (IFVSGYDVEH…DMAEGYKTKA (164 aa)). Active-site residues include R201, K226, and H308. Residue Y318 is the O-(3'-phospho-DNA)-tyrosine intermediate of the active site.

This sequence belongs to the 'phage' integrase family.

This Haemophilus influenzae (strain ATCC 51907 / DSM 11121 / KW20 / Rd) protein is Putative integrase/recombinase HI_1572.